The primary structure comprises 505 residues: Serine/threonine-protein kinase D (505 aa).

Residues 9-271 (YEIVKSLGSG…AMYQALHSLI (263 aa)) enclose the Protein kinase domain. Residues 15-23 (LGSGGFGDT) and Lys-40 each bind ATP. Asp-136 (proton acceptor) is an active-site residue. The 70-residue stretch at 436–505 (GASATIGGIP…GWIASQLVNF (70 aa)) folds into the SH3b domain.

It belongs to the protein kinase superfamily. Ser/Thr protein kinase family.

The enzyme catalyses L-seryl-[protein] + ATP = O-phospho-L-seryl-[protein] + ADP + H(+). It carries out the reaction L-threonyl-[protein] + ATP = O-phospho-L-threonyl-[protein] + ADP + H(+). The protein is Serine/threonine-protein kinase D (spkD) of Synechocystis sp. (strain ATCC 27184 / PCC 6803 / Kazusa).